Reading from the N-terminus, the 708-residue chain is WD repeat-containing and planar cell polarity effector protein fritz homolog (708 aa).

WD repeat units lie at residues 303–342 (PLRS…TLLA) and 343–382 (QADL…IRAQ).

It belongs to the WD repeat fritz family. Interacts with sept2-a. Interacts with intu and fuz; fuz, intu and wdpcp probably form the core CPLANE (ciliogenesis and planar polarity effectors) complex.

Its subcellular location is the cell membrane. It localises to the cytoplasm. The protein localises to the cytoskeleton. The protein resides in the cilium axoneme. It is found in the cilium basal body. In terms of biological role, probable effector of the planar cell polarity signaling pathway which regulates the septin cytoskeleton in both ciliogenesis and collective cell movements including covergent extension during gastrulation. Controls cell shape but not polarization during convergent extension. Proposed to function as core component of the CPLANE (ciliogenesis and planar polarity effectors) complex involved in the recruitment of peripheral IFT-A proteins to basal bodies. This chain is WD repeat-containing and planar cell polarity effector protein fritz homolog (wdpcp), found in Xenopus laevis (African clawed frog).